Consider the following 69-residue polypeptide: Small ribosomal subunit protein bS21 (69 aa).

The protein belongs to the bacterial ribosomal protein bS21 family.

The chain is Small ribosomal subunit protein bS21 (rpsU) from Treponema pallidum (strain Nichols).